A 297-amino-acid polypeptide reads, in one-letter code: MAPSQLPPMFNPTPQDIEMLLAAQCHLGSKNLQVHMEPYLWKTRPDGVNVINIGKTWEKILLAARIIAAIDNPADICVISARPYGQRAVLKFAAHTGATAIAGRFTPGNFTNYITRSFKEPRLIIVTDPRTDAQAIKEASYVNIPVIALCDTDSPTEFVDVAIPTNNKGRHAIGLIWWLLAREVLRLRGTLATRETEWDVVVDLYFYRDPEAEENKEIADETKVPGAEEIGAGAVESGFAGENWDTQAPGAGVPGTAFAAATAAPTSWEADGGDWAASSAAPAGESWAETQPAEAKW.

Residues 263–289 (AAPTSWEADGGDWAASSAAPAGESWAE) show a composition bias toward low complexity. The segment at 263 to 297 (AAPTSWEADGGDWAASSAAPAGESWAETQPAEAKW) is disordered.

The protein belongs to the universal ribosomal protein uS2 family. In terms of assembly, component of the small ribosomal subunit. Mature ribosomes consist of a small (40S) and a large (60S) subunit. The 40S subunit contains about 33 different proteins and 1 molecule of RNA (18S). The 60S subunit contains about 49 different proteins and 3 molecules of RNA (25S, 5.8S and 5S). Interacts with rps21.

Its subcellular location is the cytoplasm. Its function is as follows. Required for the assembly and/or stability of the 40S ribosomal subunit. Required for the processing of the 20S rRNA-precursor to mature 18S rRNA in a late step of the maturation of 40S ribosomal subunits. This chain is Small ribosomal subunit protein uS2 (rps0), found in Neosartorya fischeri (strain ATCC 1020 / DSM 3700 / CBS 544.65 / FGSC A1164 / JCM 1740 / NRRL 181 / WB 181) (Aspergillus fischerianus).